Consider the following 350-residue polypeptide: 26S proteasome non-ATPase regulatory subunit 8 (350 aa).

The tract at residues 1–24 (MFIKGRAPRAPPRERRRATRGGLR) is disordered. Residue Ser-106 is modified to Phosphoserine. Residues 162 to 331 (PSFERYMAQL…QQKPEDTTIP (170 aa)) form the PCI domain. Lys-297 participates in a covalent cross-link: Glycyl lysine isopeptide (Lys-Gly) (interchain with G-Cter in SUMO2).

The protein belongs to the proteasome subunit S14 family. In terms of assembly, component of the 19S proteasome regulatory particle complex. The 26S proteasome consists of a 20S core particle (CP) and two 19S regulatory subunits (RP). The regulatory particle is made of a lid composed of 9 subunits including PSMD8, a base containing 6 ATPases and few additional components. Interacts with DDI2. Interacts with TASOR.

Component of the 26S proteasome, a multiprotein complex involved in the ATP-dependent degradation of ubiquitinated proteins. This complex plays a key role in the maintenance of protein homeostasis by removing misfolded or damaged proteins, which could impair cellular functions, and by removing proteins whose functions are no longer required. Therefore, the proteasome participates in numerous cellular processes, including cell cycle progression, apoptosis, or DNA damage repair. In Homo sapiens (Human), this protein is 26S proteasome non-ATPase regulatory subunit 8 (PSMD8).